Consider the following 67-residue polypeptide: Kappa-conotoxin-like Em11.8 (67 aa).

Positions 1 to 26 (MMFRLTSVSCFLLVIACLNLFQVVLT) are cleaved as a signal peptide. 4 disulfide bridges follow: cysteine 29/cysteine 43, cysteine 36/cysteine 48, cysteine 42/cysteine 51, and cysteine 47/cysteine 55. Position 59 is a phenylalanine amide (phenylalanine 59). The propeptide occupies 63–67 (ATFQE).

It belongs to the conotoxin I2 superfamily. As to expression, expressed by the venom duct.

It is found in the secreted. Inhibits the vertebrate voltage-gated potassium channels Kv1.1/KCNA1 and Kv1.3/KCNA3. This is Kappa-conotoxin-like Em11.8 from Conus emaciatus (False virgin cone).